Consider the following 260-residue polypeptide: Pyridoxine 5'-phosphate synthase (260 aa).

Asparagine 10 and arginine 21 together coordinate 3-amino-2-oxopropyl phosphate. Histidine 46 (proton acceptor) is an active-site residue. The 1-deoxy-D-xylulose 5-phosphate site is built by arginine 48 and histidine 53. Glutamate 76 acts as the Proton acceptor in catalysis. Threonine 113 lines the 1-deoxy-D-xylulose 5-phosphate pocket. Histidine 204 serves as the catalytic Proton donor. Residues aspartate 205 and glycine 227–histidine 228 each bind 3-amino-2-oxopropyl phosphate.

The protein belongs to the PNP synthase family. In terms of assembly, homooctamer; tetramer of dimers.

Its subcellular location is the cytoplasm. The enzyme catalyses 3-amino-2-oxopropyl phosphate + 1-deoxy-D-xylulose 5-phosphate = pyridoxine 5'-phosphate + phosphate + 2 H2O + H(+). The protein operates within cofactor biosynthesis; pyridoxine 5'-phosphate biosynthesis; pyridoxine 5'-phosphate from D-erythrose 4-phosphate: step 5/5. Its function is as follows. Catalyzes the complicated ring closure reaction between the two acyclic compounds 1-deoxy-D-xylulose-5-phosphate (DXP) and 3-amino-2-oxopropyl phosphate (1-amino-acetone-3-phosphate or AAP) to form pyridoxine 5'-phosphate (PNP) and inorganic phosphate. The sequence is that of Pyridoxine 5'-phosphate synthase from Xylella fastidiosa (strain M23).